A 135-amino-acid polypeptide reads, in one-letter code: Small ribosomal subunit protein uS11 (135 aa).

A compositionally biased stretch (polar residues) spans M1–G10. The interval M1 to H28 is disordered. Over residues K12–H28 the composition is skewed to basic residues.

It belongs to the universal ribosomal protein uS11 family. In terms of assembly, part of the 30S ribosomal subunit. Interacts with proteins S7 and S18. Binds to IF-3.

Functionally, located on the platform of the 30S subunit, it bridges several disparate RNA helices of the 16S rRNA. Forms part of the Shine-Dalgarno cleft in the 70S ribosome. This is Small ribosomal subunit protein uS11 from Acidothermus cellulolyticus (strain ATCC 43068 / DSM 8971 / 11B).